We begin with the raw amino-acid sequence, 233 residues long: MYKRVLLKLSGEVLSGEGEKGFNHENIIYLVDELKKILEYGTNVGIVIGAGNLFRGREMQELSPTIADQIGMLGTVINALYLKDIFEKNNLRTVVVSQVSSLPSIRPIHYDDINLYFDAGYLVIFAGGTSNPFFTTDTAAALRAVEMKADILIKGTKVDGIYDKDPKKFTDARKFDTLTYDEAIDKGLKIMDTEAFSICKRYDMKILVMDFFKESNLLSAVREENVGTLVVPK.

Residues 8–11, Gly51, and Arg55 each bind ATP; that span reads KLSG. Residues Asp68 and 129–136 contribute to the UMP site; that span reads TSNPFFTT. Residues Thr156, Tyr162, and Asp165 each coordinate ATP.

It belongs to the UMP kinase family. In terms of assembly, homohexamer.

It is found in the cytoplasm. The enzyme catalyses UMP + ATP = UDP + ADP. It participates in pyrimidine metabolism; CTP biosynthesis via de novo pathway; UDP from UMP (UMPK route): step 1/1. Its activity is regulated as follows. Inhibited by UTP. Its function is as follows. Catalyzes the reversible phosphorylation of UMP to UDP. In Thermosipho melanesiensis (strain DSM 12029 / CIP 104789 / BI429), this protein is Uridylate kinase.